Reading from the N-terminus, the 82-residue chain is ATP synthase subunit c, chloroplastic (82 aa).

Helical transmembrane passes span 4 to 24 (IISA…AIGP) and 57 to 77 (LAFM…LLFA).

The protein belongs to the ATPase C chain family. As to quaternary structure, F-type ATPases have 2 components, F(1) - the catalytic core - and F(0) - the membrane proton channel. F(1) has five subunits: alpha(3), beta(3), gamma(1), delta(1), epsilon(1). F(0) has four main subunits: a(1), b(1), b'(1) and c(10-14). The alpha and beta chains form an alternating ring which encloses part of the gamma chain. F(1) is attached to F(0) by a central stalk formed by the gamma and epsilon chains, while a peripheral stalk is formed by the delta, b and b' chains.

Its subcellular location is the plastid. It localises to the chloroplast thylakoid membrane. Functionally, f(1)F(0) ATP synthase produces ATP from ADP in the presence of a proton or sodium gradient. F-type ATPases consist of two structural domains, F(1) containing the extramembraneous catalytic core and F(0) containing the membrane proton channel, linked together by a central stalk and a peripheral stalk. During catalysis, ATP synthesis in the catalytic domain of F(1) is coupled via a rotary mechanism of the central stalk subunits to proton translocation. Its function is as follows. Key component of the F(0) channel; it plays a direct role in translocation across the membrane. A homomeric c-ring of between 10-14 subunits forms the central stalk rotor element with the F(1) delta and epsilon subunits. The sequence is that of ATP synthase subunit c, chloroplastic from Thalassiosira pseudonana (Marine diatom).